Consider the following 452-residue polypeptide: NADH-ubiquinone oxidoreductase chain 4 (452 aa).

The next 14 helical transmembrane spans lie at 7-27, 57-77, 95-115, 116-136, 145-165, 186-206, 218-238, 251-271, 278-298, 303-323, 336-356, 360-380, 386-406, and 428-448; these read VLMS…IIAL, MMSF…ILAS, VILL…MFYI, WFEA…YQPE, MIYT…IFIV, MALA…MFTV, PIAG…YGIL, TSSL…LICL, SLIA…ALMS, FQAA…LFVM, LFLM…WFLF, NMAA…TSIL, AFIL…YMYT, and LTLM…PELI.

Belongs to the complex I subunit 4 family.

It is found in the mitochondrion membrane. The enzyme catalyses a ubiquinone + NADH + 5 H(+)(in) = a ubiquinol + NAD(+) + 4 H(+)(out). Core subunit of the mitochondrial membrane respiratory chain NADH dehydrogenase (Complex I) that is believed to belong to the minimal assembly required for catalysis. Complex I functions in the transfer of electrons from NADH to the respiratory chain. The immediate electron acceptor for the enzyme is believed to be ubiquinone. This Lumbricus terrestris (Common earthworm) protein is NADH-ubiquinone oxidoreductase chain 4 (ND4).